We begin with the raw amino-acid sequence, 286 residues long: Urease accessory protein UreD (286 aa).

This sequence belongs to the UreD family. In terms of assembly, ureD, UreF and UreG form a complex that acts as a GTP-hydrolysis-dependent molecular chaperone, activating the urease apoprotein by helping to assemble the nickel containing metallocenter of UreC. The UreE protein probably delivers the nickel.

It localises to the cytoplasm. Its function is as follows. Required for maturation of urease via the functional incorporation of the urease nickel metallocenter. In Rhodopseudomonas palustris (strain BisA53), this protein is Urease accessory protein UreD.